The sequence spans 1059 residues: MSGVMVGSHADMAPASTAEGAGEKPGPAAPAPAAQYECGECGKSFRWSSRLLHHQRTHTGERPYKCPDCPKAFKGSSALLYHQRGHTGERPYQCPDCPKAFKRSSLLQIHRSVHTGLRAFICGQCGLAFKWSSHYQYHLRQHTGERPYPCPDCPKAFKNSSSLRRHRHVHTGERPYTCGVCGKSFTQSTNLRQHQRVHTGERPFRCPLCPKTFTHSSNLLLHQRTHGAAPAPGTASAAPPPQSREPGKVFVCDAYLQRHLQPHSPPAPPAPPPPPPPVVPELFLAAAETTVELVYRCDGCEQGFSSEELLLEHQPCPGPDAAPQPQEAPAEAPKADQPPSPLPQPPPPAAAPAPGFACLPCGKSFRTVAGLSRHQHSHGAAGGQAFRCGSCDGSFPQLASLLAHQQCHVEEAAAGRPPPQAEAAEVTCPQEPLAPAAPVPPPPPSAPASAERPYKCAECGKSFKGSSGLRYHLRDHTGERPYQCGECGKAFKRSSLLAIHQRVHTGLRAFTCGQCGLTFKWSSHYQYHLRLHSGERPYACGECGKAFRNTSCLRRHRHVHTGERPHACGVCGKSFAQTSNLRQHQRVHTGERPFRCPLCPKTFTHSSNLLLHQRTHSAERPFTCPICGRGFVMAAYLQRHLRTHAPANTPPSTTAPAAGPQPPAPLAAARAPPATQDVHVLPHLQATLSLEVAGGTAQAPSLGPAAPNSQTFLLVQTAQGLQLIPSSVQPPTPPPPPAPPKLILLPSSSAGAGGGRARQGPRAVGKAGQGAGVVWLPGPGGLGVQGAASAGASGTGQSLIVLQNVGGGEAGPQEMSGVQLQPLRPAPEVTTVQLQPAQEVTTVQLQPAQEVTTVQLQPAQEVTTVQLQPVAGQLSNSSGGAVATEAPNLLVVQSGAAEELLTGPGPGEAGDGEASTGVVQDVLFETLQTDEGLQSVLVLSGADGEQTRLCVQEVETLPPGLTEPPATGPPGQKLLIIRSAPATELLDSSNTGGGTATLQLLAPPPSGPASGPAGLPGAPASQMVQVVPAGAGPGVMTPQGLPSIQIVQTLPAVQLVHTF.

6 C2H2-type zinc fingers span residues tyrosine 36–histidine 58, tyrosine 64–histidine 86, tyrosine 92–histidine 114, phenylalanine 120–histidine 142, tyrosine 148–histidine 170, and tyrosine 176–histidine 198. Position 199 is a phosphothreonine (threonine 199). Residues phenylalanine 204–histidine 226 form a C2H2-type 7 zinc finger. Disordered regions lie at residues histidine 226 to glycine 247, leucine 260 to proline 280, and glutamate 312 to alanine 351. Positions alanine 228–alanine 237 are enriched in low complexity. Residues histidine 263 to valine 279 show a composition bias toward pro residues. A compositionally biased stretch (low complexity) spans proline 323–alanine 335. Over residues aspartate 336–alanine 351 the composition is skewed to pro residues. C2H2-type zinc fingers lie at residues phenylalanine 356–histidine 378, phenylalanine 386–histidine 408, tyrosine 454–histidine 476, tyrosine 482–histidine 504, phenylalanine 510–histidine 532, tyrosine 538–histidine 560, and histidine 566–histidine 588. Phosphothreonine is present on threonine 589. 2 C2H2-type zinc fingers span residues phenylalanine 594–histidine 616 and phenylalanine 622–histidine 644. Residues histidine 644–alanine 658 are compositionally biased toward low complexity. A disordered region spans residues histidine 644–alanine 674. 4 tandem repeats follow at residues valine 818–threonine 831, valine 832–threonine 842, valine 843–threonine 853, and valine 854–threonine 864. Positions valine 818–threonine 864 are 4 X approximate tandem repeats. Residues aspartate 943–phenylalanine 1059 form an interaction with TAF4B region.

In terms of assembly, interacts with TAF4B.

It is found in the nucleus. Transcriptional activator. Binds DNA on GT-box consensus sequence 5'-TTGGTT-3'. Plays a role in spermiogenesis. The sequence is that of Zinc finger protein 628 (ZNF628) from Homo sapiens (Human).